The chain runs to 812 residues: Xaa-Pro dipeptidyl-peptidase (812 aa).

Active-site charge relay system residues include S372, D492, and H523.

Belongs to the peptidase S15 family. Homodimer.

The protein localises to the cytoplasm. The catalysed reaction is Hydrolyzes Xaa-Pro-|- bonds to release unblocked, N-terminal dipeptides from substrates including Ala-Pro-|-p-nitroanilide and (sequentially) Tyr-Pro-|-Phe-Pro-|-Gly-Pro-|-Ile.. Removes N-terminal dipeptides sequentially from polypeptides having unsubstituted N-termini provided that the penultimate residue is proline. The polypeptide is Xaa-Pro dipeptidyl-peptidase (Pediococcus pentosaceus (strain ATCC 25745 / CCUG 21536 / LMG 10740 / 183-1w)).